The following is a 481-amino-acid chain: MQWEVVIGLEIHTQLSTQSKIFSGSATTFGSEPNTQACLVDLGMPGVLPVLNKEAVRMAVKFGLAVDAEIGQHNVFARKNYFYPDLPKGYQISQMELPIVGKGHLDIPLEDGTVKRVGITRAHLEEDAGKSLHEDFQGMTGIDLNRAGTPLLEIVSEPDMRSAKEAVAYVKAIHAIVRYLGICDGNMAEGSLRCDCNVSIRPKGQVEFGTRCEIKNVNSFRFIEKAINSEIQRQIDLIEDGGKVIQQTRLYDPNTNETRAMRSKEEANDYRYFPDPDLLPVIIEDSFIEETRATLPELPPQKRERFQSQFGLSTYDASVLASSREQADYFEKVVSISGDAKLAANWVMVELGSLLNKQGVEIDQSPVSAEQLGGMLKRITDNTISGKIAKMVFEAMANGEGSADEVIEKRGLKQVTDSGAIESMLDEVLAANAEQVEQYRAADEAKRGKMFGFFVGQAMKASKGKANPQQVNELLKAKLEG.

This sequence belongs to the GatB/GatE family. GatB subfamily. In terms of assembly, heterotrimer of A, B and C subunits.

It catalyses the reaction L-glutamyl-tRNA(Gln) + L-glutamine + ATP + H2O = L-glutaminyl-tRNA(Gln) + L-glutamate + ADP + phosphate + H(+). The catalysed reaction is L-aspartyl-tRNA(Asn) + L-glutamine + ATP + H2O = L-asparaginyl-tRNA(Asn) + L-glutamate + ADP + phosphate + 2 H(+). Its function is as follows. Allows the formation of correctly charged Asn-tRNA(Asn) or Gln-tRNA(Gln) through the transamidation of misacylated Asp-tRNA(Asn) or Glu-tRNA(Gln) in organisms which lack either or both of asparaginyl-tRNA or glutaminyl-tRNA synthetases. The reaction takes place in the presence of glutamine and ATP through an activated phospho-Asp-tRNA(Asn) or phospho-Glu-tRNA(Gln). This is Aspartyl/glutamyl-tRNA(Asn/Gln) amidotransferase subunit B from Pseudomonas syringae pv. tomato (strain ATCC BAA-871 / DC3000).